A 1040-amino-acid chain; its full sequence is Vacuolar membrane protease (1040 aa).

Residues 1–9 (MINPISFRP) are Cytoplasmic-facing. A helical transmembrane segment spans residues 10 to 30 (GPVTFWTTLIYLALLIPIVII). Residues 31–405 (NEEPPAAPKT…SFVLFGLRGM (375 aa)) lie on the Vacuolar side of the membrane. Residues asparagine 48, asparagine 117, asparagine 120, and asparagine 129 are each glycosylated (N-linked (GlcNAc...) asparagine). Residues histidine 186 and aspartate 198 each coordinate Zn(2+). Catalysis depends on glutamate 232, which acts as the Proton acceptor. Residues glutamate 233, glutamate 258, and histidine 331 each coordinate Zn(2+). The helical transmembrane segment at 406–426 (FAWSLTLLIATPLILVGITWL) threads the bilayer. Residues 427–436 (LRNLDKDYFF) are Cytoplasmic-facing. Residues 437-456 (TSTVKTKEHPEYEAVPIGGW) form a helical membrane-spanning segment. The Vacuolar portion of the chain corresponds to 457 to 462 (KGFFRW). The chain crosses the membrane as a helical span at residues 463 to 483 (AMMVSIFYFSFWMIMRGANFV). Residues 484–490 (RPSALHR) lie on the Cytoplasmic side of the membrane. The helical transmembrane segment at 491–511 (GYANLWLFVFGWIVLVAVTAL) threads the bilayer. Residues 512 to 521 (EDRRRIAAGY) are Vacuolar-facing. Residues 522-542 (IFVFLESAIFLSCLISFVELL) traverse the membrane as a helical segment. Over 543 to 715 (ALPRKSAYAL…YEHEQDWSGH (173 aa)) the chain is Cytoplasmic. The tract at residues 563–680 (HSGYQGYRDS…NGTNDRGRTT (118 aa)) is disordered. Composition is skewed to low complexity over residues 577–594 (SSGA…PSSP) and 616–626 (APSVAAHSSQP). A compositionally biased stretch (polar residues) spans 636–647 (GRSTSAPIPSTT). Over residues 650-661 (DEDESEDDDDEA) the composition is skewed to acidic residues. Residues 716–736 (LPSWAWFFQFLLLGPFMIILA) form a helical membrane-spanning segment. The Vacuolar portion of the chain corresponds to 737–758 (AQTGLMLTDAVYQTGSDGSKLF). Residues 759-779 (TPYLMIFFFTLLLILPLTPFI) form a helical membrane-spanning segment. The Cytoplasmic portion of the chain corresponds to 780-785 (HRVTHH). The helical transmembrane segment at 786–806 (IPVFLLVVFIVTLTYNLIAFP) threads the bilayer. Residues 807–1040 (FSANNRYKAF…VEGRKAFKIV (234 aa)) lie on the Vacuolar side of the membrane. Residue asparagine 900 is glycosylated (N-linked (GlcNAc...) asparagine).

The protein belongs to the peptidase M28 family. The cofactor is Zn(2+).

It localises to the vacuole membrane. Functionally, may be involved in vacuolar sorting and osmoregulation. This Sordaria macrospora (strain ATCC MYA-333 / DSM 997 / K(L3346) / K-hell) protein is Vacuolar membrane protease.